Consider the following 100-residue polypeptide: Nucleoid-associated protein Rcas_2292 (100 aa).

This sequence belongs to the YbaB/EbfC family. In terms of assembly, homodimer.

The protein resides in the cytoplasm. It localises to the nucleoid. In terms of biological role, binds to DNA and alters its conformation. May be involved in regulation of gene expression, nucleoid organization and DNA protection. The chain is Nucleoid-associated protein Rcas_2292 from Roseiflexus castenholzii (strain DSM 13941 / HLO8).